The following is a 91-amino-acid chain: Putative antitoxin YutD (91 aa).

An intrachain disulfide couples Cys-77 to Cys-81.

As to quaternary structure, homodimer, probably forms a complex with cognate toxin YutE.

Probable antitoxin component of a putative type VII toxin-antitoxin (TA) system. Probably neutralizes cognate toxin YutE. This is Putative antitoxin YutD (yutD) from Bacillus subtilis (strain 168).